Consider the following 383-residue polypeptide: Chaperone protein DnaJ (383 aa).

Residues 6-70 (DYYDVLGVGR…QKRAAYDQYG (65 aa)) enclose the J domain. The CR-type zinc finger occupies 140 to 222 (GKETKISYSR…CHGTGREEER (83 aa)). Residues cysteine 153, cysteine 156, cysteine 170, cysteine 173, cysteine 196, cysteine 199, cysteine 210, and cysteine 213 each contribute to the Zn(2+) site. 4 CXXCXGXG motif repeats span residues 153-160 (CHTCHGSG), 170-177 (CHKCHGAG), 196-203 (CDVCGGTG), and 210-217 (CDTCHGTG).

The protein belongs to the DnaJ family. In terms of assembly, homodimer. It depends on Zn(2+) as a cofactor.

It is found in the cytoplasm. In terms of biological role, participates actively in the response to hyperosmotic and heat shock by preventing the aggregation of stress-denatured proteins and by disaggregating proteins, also in an autonomous, DnaK-independent fashion. Unfolded proteins bind initially to DnaJ; upon interaction with the DnaJ-bound protein, DnaK hydrolyzes its bound ATP, resulting in the formation of a stable complex. GrpE releases ADP from DnaK; ATP binding to DnaK triggers the release of the substrate protein, thus completing the reaction cycle. Several rounds of ATP-dependent interactions between DnaJ, DnaK and GrpE are required for fully efficient folding. Also involved, together with DnaK and GrpE, in the DNA replication of plasmids through activation of initiation proteins. This is Chaperone protein DnaJ from Latilactobacillus sakei (Lactobacillus sakei).